A 271-amino-acid chain; its full sequence is Orotidine 5'-phosphate decarboxylase (271 aa).

Lysine 97 (proton donor) is an active-site residue.

The protein belongs to the OMP decarboxylase family. Type 2 subfamily.

The enzyme catalyses orotidine 5'-phosphate + H(+) = UMP + CO2. Its pathway is pyrimidine metabolism; UMP biosynthesis via de novo pathway; UMP from orotate: step 2/2. The sequence is that of Orotidine 5'-phosphate decarboxylase from Leptospira borgpetersenii serovar Hardjo-bovis (strain JB197).